Consider the following 119-residue polypeptide: Large ribosomal subunit protein uL18 (119 aa).

It belongs to the universal ribosomal protein uL18 family. In terms of assembly, part of the 50S ribosomal subunit; part of the 5S rRNA/L5/L18/L25 subcomplex. Contacts the 5S and 23S rRNAs.

Functionally, this is one of the proteins that bind and probably mediate the attachment of the 5S RNA into the large ribosomal subunit, where it forms part of the central protuberance. The chain is Large ribosomal subunit protein uL18 from Jannaschia sp. (strain CCS1).